A 247-amino-acid chain; its full sequence is Acetoacetate decarboxylase (247 aa).

Catalysis depends on K116, which acts as the Schiff-base intermediate with acetoacetate.

It belongs to the ADC family.

It catalyses the reaction acetoacetate + H(+) = acetone + CO2. Functionally, catalyzes the conversion of acetoacetate to acetone and carbon dioxide. This is Acetoacetate decarboxylase from Ralstonia nicotianae (strain ATCC BAA-1114 / GMI1000) (Ralstonia solanacearum).